Reading from the N-terminus, the 273-residue chain is Eukaryotic translation initiation factor 3 subunit G-2 (273 aa).

Residues 168–192 (PPFMKDGGGGSGGKNWGRGRDRDDS) are disordered. The segment covering 173 to 183 (DGGGGSGGKNW) has biased composition (gly residues). The region spanning 193–271 (SAVRISNLSE…LILCVEWSKP (79 aa)) is the RRM domain.

It belongs to the eIF-3 subunit G family. In terms of assembly, component of the eukaryotic translation initiation factor 3 (eIF-3) complex. The eIF-3 complex interacts with pix.

It is found in the cytoplasm. In terms of biological role, RNA-binding component of the eukaryotic translation initiation factor 3 (eIF-3) complex, which is involved in protein synthesis of a specialized repertoire of mRNAs and, together with other initiation factors, stimulates binding of mRNA and methionyl-tRNAi to the 40S ribosome. The eIF-3 complex specifically targets and initiates translation of a subset of mRNAs involved in cell proliferation. This subunit can bind 18S rRNA. The chain is Eukaryotic translation initiation factor 3 subunit G-2 from Drosophila erecta (Fruit fly).